A 358-amino-acid polypeptide reads, in one-letter code: tRNA-specific 2-thiouridylase MnmA (358 aa).

Residues 6–13 and M32 each bind ATP; that span reads ALSGGVDS. The active-site Nucleophile is C103. An intrachain disulfide couples C103 to C201. G127 serves as a coordination point for ATP. Positions 151 to 153 are interaction with tRNA; the sequence is KDQ. C201 functions as the Cysteine persulfide intermediate in the catalytic mechanism.

This sequence belongs to the MnmA/TRMU family.

The protein localises to the cytoplasm. It carries out the reaction S-sulfanyl-L-cysteinyl-[protein] + uridine(34) in tRNA + AH2 + ATP = 2-thiouridine(34) in tRNA + L-cysteinyl-[protein] + A + AMP + diphosphate + H(+). Functionally, catalyzes the 2-thiolation of uridine at the wobble position (U34) of tRNA, leading to the formation of s(2)U34. This is tRNA-specific 2-thiouridylase MnmA from Thermotoga neapolitana (strain ATCC 49049 / DSM 4359 / NBRC 107923 / NS-E).